Reading from the N-terminus, the 297-residue chain is 4-diphosphocytidyl-2-C-methyl-D-erythritol kinase (297 aa).

Catalysis depends on residues Lys6 and Asp144.

The protein belongs to the GHMP kinase family. IspE subfamily.

It carries out the reaction 4-CDP-2-C-methyl-D-erythritol + ATP = 4-CDP-2-C-methyl-D-erythritol 2-phosphate + ADP + H(+). It participates in isoprenoid biosynthesis; isopentenyl diphosphate biosynthesis via DXP pathway; isopentenyl diphosphate from 1-deoxy-D-xylulose 5-phosphate: step 3/6. In terms of biological role, catalyzes the phosphorylation of the position 2 hydroxy group of 4-diphosphocytidyl-2C-methyl-D-erythritol. The protein is 4-diphosphocytidyl-2-C-methyl-D-erythritol kinase of Leptospira interrogans serogroup Icterohaemorrhagiae serovar Lai (strain 56601).